A 315-amino-acid chain; its full sequence is ATP synthase gamma chain (315 aa).

It belongs to the ATPase gamma chain family. F-type ATPases have 2 components, CF(1) - the catalytic core - and CF(0) - the membrane proton channel. CF(1) has five subunits: alpha(3), beta(3), gamma(1), delta(1), epsilon(1). CF(0) has three main subunits: a, b and c.

The protein resides in the cellular thylakoid membrane. Produces ATP from ADP in the presence of a proton gradient across the membrane. The gamma chain is believed to be important in regulating ATPase activity and the flow of protons through the CF(0) complex. The polypeptide is ATP synthase gamma chain (Synechococcus sp. (strain RCC307)).